Reading from the N-terminus, the 554-residue chain is Solute carrier family 22 member 1 (554 aa).

The Cytoplasmic portion of the chain corresponds to 1-24; sequence MPSVDDVLEQVGEFGWFQKQAFLN. A helical membrane pass occupies residues 25–45; it reads LCLTSVAFAPIYVGIVFLGFT. At 46–234 the chain is on the extracellular side; sequence PDHRCRSPGV…EFVGLGYRKT (189 aa). N-linked (GlcNAc...) asparagine glycosylation is present at Asn71. The helical transmembrane segment at 235–255 threads the bilayer; the sequence is VAILYQTAFSVGLVLLSGLAY. Residues 256-261 lie on the Cytoplasmic side of the membrane; the sequence is AVPHWR. Residues 262 to 282 traverse the membrane as a helical segment; sequence SLQLAVSLPIFLLLLCYWFVP. A Proline-rich sequence motif is present at residues 282 to 286; the sequence is PESPR. Over 283–347 the chain is Extracellular; sequence ESPRWLLSQK…FRTQNLRKYT (65 aa). Ser333 is modified (phosphoserine). A helical transmembrane segment spans residues 348–368; it reads FILMYLWFTSSVLYQGLIMHV. Residues 369–376 lie on the Cytoplasmic side of the membrane; sequence GATGGSLY. A helical membrane pass occupies residues 377-397; sequence LDFLYSALVEFPAAFVILLII. The Extracellular segment spans residues 398 to 402; that stretch reads DRFGR. The chain crosses the membrane as a helical span at residues 403–423; that stretch reads LYLLAGSNLLAGAACFFMIFI. The Cytoplasmic segment spans residues 424-431; the sequence is SHDLHWLS. A helical transmembrane segment spans residues 432-452; the sequence is IVAACIGRMGITIVFQMVCLV. Residues 453–464 are Extracellular-facing; the sequence is SAELYPTFIRNL. The chain crosses the membrane as a helical span at residues 465–485; that stretch reads GVMVCSSLCDLGGVVAPFLVF. Residues 486 to 492 lie on the Cytoplasmic side of the membrane; it reads RLTEVWR. Residues 493 to 513 form a helical membrane-spanning segment; it reads GLPLVLFAALGLVAGGMSLLL. Residues 514 to 554 lie on the Extracellular side of the membrane; sequence PETKGVALPETIEEVERLGRKAKPRDNMIYLQVKMPEPAGL.

Belongs to the major facilitator (TC 2.A.1) superfamily. Organic cation transporter (TC 2.A.1.19) family. Phosphorylated.

It localises to the basolateral cell membrane. The protein localises to the apical cell membrane. It is found in the lateral cell membrane. The protein resides in the basal cell membrane. Its subcellular location is the cell membrane. The enzyme catalyses 1-methylnicotinamide(out) = 1-methylnicotinamide(in). The catalysed reaction is dopamine(out) = dopamine(in). It carries out the reaction serotonin(out) = serotonin(in). It catalyses the reaction (R)-adrenaline(out) = (R)-adrenaline(in). The enzyme catalyses (R)-noradrenaline(out) = (R)-noradrenaline(in). The catalysed reaction is histamine(out) = histamine(in). It carries out the reaction guanidine(out) = guanidine(in). It catalyses the reaction choline(out) = choline(in). The enzyme catalyses acetylcholine(in) = acetylcholine(out). The catalysed reaction is thiamine(in) = thiamine(out). It carries out the reaction spermidine(in) = spermidine(out). It catalyses the reaction agmatine(out) = agmatine(in). The enzyme catalyses putrescine(out) = putrescine(in). The catalysed reaction is (R)-carnitine(in) = (R)-carnitine(out). It carries out the reaction O-isobutanoyl-(R)-carnitine(in) = O-isobutanoyl-(R)-carnitine(out). It catalyses the reaction O-acetyl-(R)-carnitine(in) = O-acetyl-(R)-carnitine(out). The enzyme catalyses O-3-hydroxybutanoyl-(R)-carnitine(in) = O-3-hydroxybutanoyl-(R)-carnitine(out). The catalysed reaction is O-propanoyl-(R)-carnitine(in) = O-propanoyl-(R)-carnitine(out). It carries out the reaction O-butanoyl-(R)-carnitine(in) = O-butanoyl-(R)-carnitine(out). It catalyses the reaction O-2-methylbutanoyl-(R)-carnitine(in) = O-2-methylbutanoyl-(R)-carnitine(out). The enzyme catalyses O-3-methylbutanoyl-(R)-carnitine(in) = O-3-methylbutanoyl-(R)-carnitine(out). The catalysed reaction is O-hexanoyl-(R)-carnitine(in) = O-hexanoyl-(R)-carnitine(out). It carries out the reaction L-histidyl-L-proline diketopiperazine(in) = L-histidyl-L-proline diketopiperazine(out). It catalyses the reaction (R)-salsolinol(in) = (R)-salsolinol(out). The enzyme catalyses prostaglandin F2alpha(out) = prostaglandin F2alpha(in). The catalysed reaction is prostaglandin E2(out) = prostaglandin E2(in). Its activity is regulated as follows. Phosphorylation of the transporter leads to changes in its substrate affinity, resulting in a regulation of the transport activity. In contrast with rat ortholog, ASP uptake is inhibited by protein kinase A (PKA) and C (PKC) activation. ASP uptake is also endogenously activated by calmodulin, the calmodulin-dependent kinase II and LCK tyrosine kinase. Inhibited by cGMP, most likely through a cGMP-binding protein that interacts with OCT1. Its function is as follows. Electrogenic voltage-dependent transporter that mediates the transport of a variety of organic cations such as endogenous bioactive amines, cationic drugs and xenobiotics. Functions as a pH- and Na(+)-independent, bidirectional transporter. Cation cellular uptake or release is driven by the electrochemical potential (i.e. membrane potential and concentration gradient) and substrate selectivity. Hydrophobicity is a major requirement for recognition in polyvalent substrates and inhibitors. Primarily expressed in the basolateral membrane of hepatocytes and proximal tubules and involved in the uptake and disposition of cationic compounds from the blood by hepatic and renal clearance. Most likely functions as an uptake carrier in enterocytes contributing to the intestinal elimination of organic cations from the systemic circulation. Transports endogenous monoamines such as N-1-methylnicotinamide (NMN), guanidine, neurotransmitters dopamine, serotonin, noradrenaline, adrenaline and histamine, and quaternary ammonium compound such as choline. Also transports natural polyamines such as spermidine, agmatine and putrescine at low affinity, but relatively high turnover. Involved in the hepatic and intestinal uptake of the vitamin B1/thiamine, hence regulating hepatic lipid and energy metabolism. Contributes to the influx and efflux of fatty acid carriers carnitines and acylcarnitines across the basolateral membrane of hepatocytes, from the liver to the systemic circulation and inversely and may be involved in regulating the systemic availability of hepatic acylcarnitines. Also capable of transporting non-amine endogenous compounds such as prostaglandin E2 (PGE2) and prostaglandin F2-alpha (PGF2-alpha). May contribute to the transport of cationic compounds in testes across the blood-testis-barrier. Also mediates the uptake of xenobiotics tributylmethylammonium (TBuMA), quinidine, N-methyl-quinine (NMQ), N-methyl-quinidine (NMQD) N-(4,4-azo-n-pentyl)-quinuclidine (APQ), azidoprocainamide methoiodide (AMP), N-(4,4-azo-n-pentyl)-21-deoxyajmalinium (APDA) and 4-(4-(dimethylamino)styryl)-N-methylpyridinium (ASP). This Sus scrofa (Pig) protein is Solute carrier family 22 member 1 (SLC22A1).